The following is a 344-amino-acid chain: Arginine N-succinyltransferase (344 aa).

L125 contacts succinyl-CoA. H229 (proton donor) is an active-site residue.

Belongs to the arginine N-succinyltransferase family.

The catalysed reaction is succinyl-CoA + L-arginine = N(2)-succinyl-L-arginine + CoA + H(+). Its pathway is amino-acid degradation; L-arginine degradation via AST pathway; L-glutamate and succinate from L-arginine: step 1/5. Functionally, catalyzes the transfer of succinyl-CoA to arginine to produce N(2)-succinylarginine. This chain is Arginine N-succinyltransferase, found in Shigella boydii serotype 4 (strain Sb227).